The chain runs to 358 residues: Glucose 1-dehydrogenase (358 aa).

Zn(2+) is bound at residue C38. T40 contacts substrate. 6 residues coordinate Zn(2+): H65, E66, C92, C95, C98, and C106. The substrate site is built by E113, E149, and N153. Position 149 (E149) interacts with Zn(2+). NADP(+)-binding positions include S187–I190, N209–R211, F268–T270, S296–N298, and K342. N298 is a binding site for substrate.

Belongs to the zinc-containing alcohol dehydrogenase family. Glucose 1-dehydrogenase subfamily. Requires Zn(2+) as cofactor.

The enzyme catalyses D-glucose + NAD(+) = D-glucono-1,5-lactone + NADH + H(+). It catalyses the reaction D-glucose + NADP(+) = D-glucono-1,5-lactone + NADPH + H(+). Functionally, catalyzes the NAD(P)(+)-dependent oxidation of D-glucose to D-gluconate via gluconolactone. Can utilize both NAD(+) and NADP(+) as electron acceptor. Is involved in the degradation of glucose through a non-phosphorylative variant of the Entner-Doudoroff pathway. In Metallosphaera sedula (strain ATCC 51363 / DSM 5348 / JCM 9185 / NBRC 15509 / TH2), this protein is Glucose 1-dehydrogenase.